We begin with the raw amino-acid sequence, 152 residues long: Peptide deformylase (152 aa).

Fe cation contacts are provided by cysteine 88 and histidine 130. The active site involves glutamate 131. Fe cation is bound at residue histidine 134.

The protein belongs to the polypeptide deformylase family. Requires Fe(2+) as cofactor.

It carries out the reaction N-terminal N-formyl-L-methionyl-[peptide] + H2O = N-terminal L-methionyl-[peptide] + formate. Functionally, removes the formyl group from the N-terminal Met of newly synthesized proteins. Requires at least a dipeptide for an efficient rate of reaction. N-terminal L-methionine is a prerequisite for activity but the enzyme has broad specificity at other positions. This is Peptide deformylase from Carboxydothermus hydrogenoformans (strain ATCC BAA-161 / DSM 6008 / Z-2901).